We begin with the raw amino-acid sequence, 369 residues long: Bi-functional coumaroyl CoA and feruloyl CoA ortho-hydroxylase Diox2 (369 aa).

One can recognise a Fe2OG dioxygenase domain in the interval 215–318; the sequence is GSRRVNLNYY…RISVPLFVNP (104 aa). Tyrosine 224 contributes to the 2-oxoglutarate binding site. Fe cation is bound by residues histidine 239, aspartate 241, and histidine 299. 2-oxoglutarate-binding residues include arginine 309 and serine 311.

Belongs to the iron/ascorbate-dependent oxidoreductase family. Requires L-ascorbate as cofactor. It depends on Fe(2+) as a cofactor.

The enzyme catalyses (E)-4-coumaroyl-CoA + 2-oxoglutarate + O2 = (E)-2,4-dihydroxycinnamoyl-CoA + succinate + CO2. It carries out the reaction (E)-feruloyl-CoA + 2-oxoglutarate + O2 = (E)-6-hydroxyferuloyl-CoA + succinate + CO2. The protein operates within phenylpropanoid metabolism. Its function is as follows. 2-oxoglutarate (OG)- and Fe(II)-dependent dioxygenase (2OGD) involved in scopoletin and umbelliferone biosynthesis. Converts feruloyl CoA into 6'-hydroxyferuloyl CoA, and p-coumaroyl CoA into 2,4-dihydroxycinnamoyl-CoA. The chain is Bi-functional coumaroyl CoA and feruloyl CoA ortho-hydroxylase Diox2 from Ruta graveolens (Common rue).